The following is a 1018-amino-acid chain: Cell wall protein 1 (1018 aa).

The first 17 residues, 1–17 (MLPSIVISIVLASFVSA), serve as a signal peptide directing secretion. The CFEM 1 domain maps to 32–143 (NPYTIYPSVA…SSLSAAATAV (112 aa)). Intrachain disulfides connect cysteine 60-cysteine 100, cysteine 64-cysteine 95, cysteine 74-cysteine 81, and cysteine 83-cysteine 116. Aspartate 78 lines the heme pocket. The segment at 147 to 227 (SEQPVETSSE…STPEDNPYTI (81 aa)) is disordered. Polar residues predominate over residues 148–164 (EQPVETSSEPAGSSQSV). The span at 165–221 (ESSQPAETSSSEPAETSSSEPAETSSETSSEQPASSEPAETSSEESSTITSAPSTPE) shows a compositional bias: low complexity. CFEM domains lie at 223–334 (NPYT…ATAV) and 393–504 (SSSS…ATAV). Intrachain disulfides connect cysteine 251-cysteine 291, cysteine 255-cysteine 286, cysteine 265-cysteine 272, and cysteine 274-cysteine 307. Aspartate 269 serves as a coordination point for heme. Residues 338-396 (SEQSVETSSESAESSQSVESSQPAETSSEQPSETSSETSSQQLSSITSAPDSSATSSSS) form a disordered region. Intrachain disulfides connect cysteine 421–cysteine 461, cysteine 425–cysteine 456, cysteine 435–cysteine 442, and cysteine 444–cysteine 477. Residue aspartate 439 coordinates heme. Residues 507–557 (SDSASETASQEPSETSSEQPSETASQQPAETSSEESSTITSAPSTPEDNPY) are disordered. Over residues 509–553 (SASETASQEPSETSSEQPSETASQQPAETSSEESSTITSAPSTPE) the composition is skewed to low complexity. The region spanning 555–666 (NPYTIYPSVA…SSLNAAATAV (112 aa)) is the CFEM 4 domain. 4 cysteine pairs are disulfide-bonded: cysteine 583–cysteine 623, cysteine 587–cysteine 618, cysteine 597–cysteine 604, and cysteine 606–cysteine 639. Aspartate 601 serves as a coordination point for heme. A disordered region spans residues 677–785 (SASESASQVP…STSTKSDAAS (109 aa)). Positions 690–766 (SAASSQSANN…AISESVAPSS (77 aa)) are enriched in low complexity. 9 N-linked (GlcNAc...) asparagine glycosylation sites follow: asparagine 698, asparagine 708, asparagine 718, asparagine 729, asparagine 743, asparagine 753, asparagine 769, asparagine 798, and asparagine 965. The span at 767-785 (YGNSTIAQPSTSTKSDAAS) shows a compositional bias: polar residues. A lipid anchor (GPI-anchor amidated serine) is attached at serine 989. The propeptide at 990–1018 (VAIANMANTKFASTMSLLVASFVFVGLFI) is removed in mature form.

The protein belongs to the RBT5 family. In terms of processing, the GPI-anchor is attached to the protein in the endoplasmic reticulum and serves to target the protein to the cell surface. There, the glucosamine-inositol phospholipid moiety is cleaved off and the GPI-modified mannoprotein is covalently attached via its lipidless GPI glycan remnant to the 1,6-beta-glucan of the outer cell wall layer.

It is found in the secreted. Its subcellular location is the cell wall. It localises to the membrane. Its function is as follows. Heme-binding protein involved in heme-iron utilization. The ability to acquire iron from host tissues is a major virulence factor of pathogenic microorganisms. Required for biofilm formation. The sequence is that of Cell wall protein 1 (CSA1) from Candida albicans (strain SC5314 / ATCC MYA-2876) (Yeast).